Reading from the N-terminus, the 853-residue chain is Neural cell adhesion molecule 1 (853 aa).

The first 19 residues, 1-19, serve as a signal peptide directing secretion; the sequence is MLQTKNLIWTLFFLGTAVS. Ig-like C2-type domains are found at residues 20 to 111, 116 to 205, 212 to 300, 307 to 412, and 415 to 500; these read LQVD…ATVN, QKLM…KDIQ, PTVQ…ASIH, PKIT…LEVQ, and PKLQ…ESLE. The Extracellular portion of the chain corresponds to 20 to 719; it reads LQVDIVPSQG…NGSPTSGLST (700 aa). Intrachain disulfides connect Cys41–Cys96 and Cys139–Cys189. Residues 152 to 156 and 161 to 165 contribute to the heparin site; these read KHKGR and KKDVR. Asn222 is a glycosylation site (N-linked (GlcNAc...) asparagine). Cys235 and Cys286 form a disulfide bridge. Asn314, Asn346, Asn432, Asn458, and Asn487 each carry an N-linked (GlcNAc...) asparagine glycan. Cys328 and Cys394 form a disulfide bridge. Cys435 and Cys488 form a disulfide bridge. 2 consecutive Fibronectin type-III domains span residues 508–607 and 609–704; these read TPSS…TQPV and EPSA…SAQP. Residues 720 to 737 traverse the membrane as a helical segment; that stretch reads GAIVGILVVTFVLLLVAV. Topologically, residues 738 to 853 are cytoplasmic; that stretch reads DVTCYFLNKC…TQIKVNESKA (116 aa). The segment at 764 to 853 is disordered; the sequence is GAKGKDMEEG…TQIKVNESKA (90 aa). Basic and acidic residues-rich tracts occupy residues 766 to 807 and 815 to 829; these read KGKD…HTEP and EPEK…ETET. Ser778 and Ser782 each carry phosphoserine. Residues 838 to 853 show a composition bias toward polar residues; it reads TVPNDATQIKVNESKA.

Interacts with MDK. Found in a complex with SLC39A6, SLC39A10 and with NCAM1; this complex controls NCAM1 phosphorylation and integration into focal adhesion complexes during epithelial-tomesenchymal transition. Interacts with synaptic plasticity regulator PANTS. In terms of processing, polysialylated by ST8SIA2 and ST8SIA4. Polysialylation modulates cell interactions by confering both attractive and repulsive properties that are highly regulated by ST8SIA2 and ST8SIA4. Polysialylation is formed on a-2,3-linked sialic acid of core glycans.

The protein resides in the cell membrane. Functionally, this protein is a cell adhesion molecule involved in neuron-neuron adhesion, neurite fasciculation, outgrowth of neurites, etc. This chain is Neural cell adhesion molecule 1, found in Bos taurus (Bovine).